Consider the following 398-residue polypeptide: Serpin-Z2A (398 aa).

The segment at 343–367 (GTEAAAATIAKAVLLSASPPSDMDF) is RCL.

The protein belongs to the serpin family.

Its function is as follows. Inhibits chymotrypsin and cathepsin G in vitro. The protein is Serpin-Z2A of Triticum aestivum (Wheat).